The following is a 273-amino-acid chain: NADPH-dependent 7-cyano-7-deazaguanine reductase (273 aa).

Position 81–83 (Val-81–Ser-83) interacts with substrate. Ser-83–Lys-84 lines the NADPH pocket. Catalysis depends on Cys-179, which acts as the Thioimide intermediate. Asp-186 acts as the Proton donor in catalysis. Ala-218–Glu-219 contacts substrate. Residue Arg-247 to Gly-248 participates in NADPH binding.

The protein belongs to the GTP cyclohydrolase I family. QueF type 2 subfamily. Homodimer.

The protein localises to the cytoplasm. The enzyme catalyses 7-aminomethyl-7-carbaguanine + 2 NADP(+) = 7-cyano-7-deazaguanine + 2 NADPH + 3 H(+). Its pathway is tRNA modification; tRNA-queuosine biosynthesis. In terms of biological role, catalyzes the NADPH-dependent reduction of 7-cyano-7-deazaguanine (preQ0) to 7-aminomethyl-7-deazaguanine (preQ1). This chain is NADPH-dependent 7-cyano-7-deazaguanine reductase, found in Rickettsia bellii (strain OSU 85-389).